Reading from the N-terminus, the 143-residue chain is 3-dehydroquinate dehydratase (143 aa).

Tyr23 (proton acceptor) is an active-site residue. The substrate site is built by Asn74, His80, and Asp87. Residue His100 is the Proton donor of the active site. Residues 101 to 102 (IS) and Arg111 contribute to the substrate site.

It belongs to the type-II 3-dehydroquinase family. As to quaternary structure, homododecamer.

It carries out the reaction 3-dehydroquinate = 3-dehydroshikimate + H2O. Its pathway is metabolic intermediate biosynthesis; chorismate biosynthesis; chorismate from D-erythrose 4-phosphate and phosphoenolpyruvate: step 3/7. In terms of biological role, catalyzes a trans-dehydration via an enolate intermediate. The polypeptide is 3-dehydroquinate dehydratase (Endomicrobium trichonymphae).